A 458-amino-acid chain; its full sequence is Neuronal acetylcholine receptor subunit beta-3 (458 aa).

The N-terminal stretch at 1–21 (MLPDFMLVLIVLGIPSSATTG) is a signal peptide. Residues 22–237 (FNSIAENEDA…VLRRLPLFYT (216 aa)) are Extracellular-facing. N-linked (GlcNAc...) asparagine glycans are attached at residues Asn-51, Asn-138, and Asn-166. Cysteines 153 and 167 form a disulfide. Helical transmembrane passes span 238–258 (LFLI…FYLP), 267–287 (LSTS…EIIP), and 300–320 (LLFI…VINV). Topologically, residues 321-428 (HHRSSSTYHP…WKFVAQVLDR (108 aa)) are cytoplasmic. A helical membrane pass occupies residues 429–449 (IFLWLFLIVSVTGSVLIFTPA).

This sequence belongs to the ligand-gated ion channel (TC 1.A.9) family. Acetylcholine receptor (TC 1.A.9.1) subfamily. Beta-3/CHRNB3 sub-subfamily. In terms of assembly, neuronal AChR seems to be composed of two different type of subunits: alpha and beta. CHRNB3/beta-3 subunit is only able to form functional nAChRs when co-assembled with another beta subunit. Participates in pentameric assemblies along with CHRNA4/alpha-4 and CHRNB2/beta-2 subunits and with CHRNA6/alpha-6 as well, forming stoichiometries such as (CHRNA3:CHRNB4)2:CHRNB3, (CHRNA4:CHRNB2)2:CHRNB3 or (CHRNA6:CHRNB2)2:CHRNB3.

The protein resides in the synaptic cell membrane. It localises to the cell membrane. The catalysed reaction is Ca(2+)(in) = Ca(2+)(out). It carries out the reaction K(+)(in) = K(+)(out). It catalyses the reaction Na(+)(in) = Na(+)(out). With respect to regulation, activated by a myriad of ligands such as acetylcholine, cytisine, nicotine, choline and epibatidine. Component of neuronal acetylcholine receptors (nAChRs) that function as pentameric, ligand-gated cation channels with high calcium permeability among other activities. nAChRs are excitatory neurotrasnmitter receptors formed by a collection of nAChR subunits known to mediate synaptic transmission in the nervous system and the neuromuscular junction. Each nAchR subunit confers differential attributes to channel properties, including activation, deactivation and desensitization kinetics, pH sensitivity, cation permeability, and binding to allosteric modulators. Has an accessory rather than functional role and is only able to form functional nAChRs when co-assembled with another beta subunit. Participates in pentameric assemblies along with CHRNA3, CHRNA4, CHRNA6, CHRNB2 and CHRNB4. Modulates receptor assembly and increases receptor sensitivity to nicotine when associated with CHRNB2, CHRNA4 and/or CHRNA6 as well as CHRNA3 and CHRNB4. Seems to play a role in nicotine addiction. This Homo sapiens (Human) protein is Neuronal acetylcholine receptor subunit beta-3.